Here is a 440-residue protein sequence, read N- to C-terminus: Ferredoxin--NADP reductase (440 aa).

The region spanning 17–75 (SRVFVYEVVGMRQNEETDQTNYPIRKSGSVFIRVPYNRMNQEMQRITRLGGKIVSIQTV) is the CpcD-like domain. The tract at residues 98–142 (AKSEGNGKATPVKTDSGAKGFAKPPAEEQLKKKDNKGNTMTQAKA) is disordered. Basic and acidic residues predominate over residues 122–133 (PAEEQLKKKDNK). The FAD-binding FR-type domain maps to 155–279 (NAPFIGKVIS…TGPVGKEMLL (125 aa)). Residues 214 to 217 (RLYS), 235 to 237 (CVR), Tyr-241, 253 to 255 (VCS), and Thr-294 each bind FAD. The NADP(+) site is built by Ser-217 and Arg-237. Residues Thr-294, 330-331 (VP), 360-361 (SR), 370-374 (RMYIQ), 399-400 (GL), and Glu-438 contribute to the NADP(+) site.

Belongs to the ferredoxin--NADP reductase type 1 family. The cofactor is FAD.

The protein localises to the cellular thylakoid membrane. It carries out the reaction 2 reduced [2Fe-2S]-[ferredoxin] + NADP(+) + H(+) = 2 oxidized [2Fe-2S]-[ferredoxin] + NADPH. The protein is Ferredoxin--NADP reductase (petH) of Nostoc sp. (strain PCC 7120 / SAG 25.82 / UTEX 2576).